We begin with the raw amino-acid sequence, 124 residues long: Fluoride-specific ion channel FluC (124 aa).

The next 4 helical transmembrane spans lie at L6 to V26, L37 to A57, T69 to V89, and G92 to V112. Na(+) is bound by residues G73 and T76.

It belongs to the fluoride channel Fluc/FEX (TC 1.A.43) family.

The protein resides in the cell membrane. The catalysed reaction is fluoride(in) = fluoride(out). Na(+) is not transported, but it plays an essential structural role and its presence is essential for fluoride channel function. Fluoride-specific ion channel. Important for reducing fluoride concentration in the cell, thus reducing its toxicity. The protein is Fluoride-specific ion channel FluC of Methanocaldococcus jannaschii (strain ATCC 43067 / DSM 2661 / JAL-1 / JCM 10045 / NBRC 100440) (Methanococcus jannaschii).